The chain runs to 392 residues: Stilbene synthase 2 (392 aa).

Residue 55 to 58 coordinates substrate; it reads KFNR. Residue cysteine 164 is part of the active site. Substrate contacts are provided by residues leucine 267 and 305-307; that span reads GGP.

Belongs to the thiolase-like superfamily. Chalcone/stilbene synthases family. As to quaternary structure, homodimer.

It localises to the cytoplasm. The enzyme catalyses 4-coumaroyl-CoA + 3 malonyl-CoA + 3 H(+) = trans-resveratrol + 4 CO2 + 4 CoA. It functions in the pathway phytoalexin biosynthesis; 3,4',5-trihydroxystilbene biosynthesis; 3,4',5-trihydroxystilbene from trans-4-coumarate: step 2/2. Functionally, mediates resistance to pathogens which are sensitive to stilbenes. The protein is Stilbene synthase 2 of Vitis vinifera (Grape).